A 156-amino-acid polypeptide reads, in one-letter code: Ecotin (156 aa).

The N-terminal stretch at 1-19 (MKALLIAAGVAALSSTAMA) is a signal peptide. A disulfide bridge connects residues cysteine 65 and cysteine 102.

This sequence belongs to the protease inhibitor I11 (ecotin) family. In terms of assembly, homodimer.

It is found in the periplasm. In terms of biological role, general inhibitor of family S1 serine proteases. This Pseudomonas aeruginosa (strain UCBPP-PA14) protein is Ecotin.